Here is a 241-residue protein sequence, read N- to C-terminus: MRHSVKTVVVVSSLLLGTALAGGAGAQSAGNGVPSTNVNTPAPNTGQSTAQNTNTASPLPYNRATTLPAAGTEDLKKSVQALQNTLTELQALQLQTKQAHWNVSGTLWYTLHELLQDHYEGISKFADDVAERQLSVGASSDGRAITIVAASRLPEIPGGFLDDAQVIQFFTYQYETVGQRIHQRVGDVEKVDPTTANLLQEVEHIIEKYQWQMRAFLQNTPTDPNTGFDINNGKPVPLRGR.

Positions 25–65 (GAQSAGNGVPSTNVNTPAPNTGQSTAQNTNTASPLPYNRAT) are disordered. Over residues 33-57 (VPSTNVNTPAPNTGQSTAQNTNTAS) the composition is skewed to polar residues. The Fe cation site is built by H100, D127, and E131. The segment covering 220–229 (TPTDPNTGFD) has biased composition (polar residues). The segment at 220 to 241 (TPTDPNTGFDINNGKPVPLRGR) is disordered.

The protein belongs to the Dps family. As to quaternary structure, homododecamer. The 12 subunits form a hollow sphere into which the mineral iron core of up to 500 Fe(3+) can be deposited.

Its subcellular location is the cytoplasm. The enzyme catalyses 2 Fe(2+) + H2O2 + 2 H(+) = 2 Fe(3+) + 2 H2O. Protects DNA from oxidative damage by sequestering intracellular Fe(2+) ion and storing it in the form of Fe(3+) oxyhydroxide mineral. One hydrogen peroxide oxidizes two Fe(2+) ions, which prevents hydroxyl radical production by the Fenton reaction. This is DNA protection during starvation protein 2 (dps2) from Deinococcus radiodurans (strain ATCC 13939 / DSM 20539 / JCM 16871 / CCUG 27074 / LMG 4051 / NBRC 15346 / NCIMB 9279 / VKM B-1422 / R1).